The chain runs to 359 residues: Probable S-adenosylmethionine-dependent methyltransferase At5g38100 (359 aa).

Tyrosine 19, cysteine 63, asparagine 68, aspartate 104, serine 133, and phenylalanine 134 together coordinate S-adenosyl-L-homocysteine. Mg(2+) is bound by residues asparagine 172, aspartate 258, and phenylalanine 260.

This sequence belongs to the methyltransferase superfamily. Type-7 methyltransferase family. Homodimer. Requires Mg(2+) as cofactor.

The sequence is that of Probable S-adenosylmethionine-dependent methyltransferase At5g38100 from Arabidopsis thaliana (Mouse-ear cress).